The sequence spans 406 residues: Elongation factor Tu (406 aa).

The 206-residue stretch at lysine 10–valine 215 folds into the tr-type G domain. Residues glycine 19–threonine 26 form a G1 region. Glycine 19–threonine 26 provides a ligand contact to GTP. Threonine 26 is a Mg(2+) binding site. Positions glycine 61–asparagine 65 are G2. The interval aspartate 82–glycine 85 is G3. GTP contacts are provided by residues aspartate 82–histidine 86 and asparagine 137–aspartate 140. Positions asparagine 137 to aspartate 140 are G4. Positions serine 175–leucine 177 are G5.

The protein belongs to the TRAFAC class translation factor GTPase superfamily. Classic translation factor GTPase family. EF-Tu/EF-1A subfamily. As to quaternary structure, monomer.

The protein resides in the cytoplasm. The catalysed reaction is GTP + H2O = GDP + phosphate + H(+). Its function is as follows. GTP hydrolase that promotes the GTP-dependent binding of aminoacyl-tRNA to the A-site of ribosomes during protein biosynthesis. This chain is Elongation factor Tu, found in Thermus aquaticus.